Reading from the N-terminus, the 499-residue chain is UDP-N-acetylmuramoylalanine--D-glutamate ligase (499 aa).

An ATP-binding site is contributed by 129–135 (GTNGKTT).

This sequence belongs to the MurCDEF family.

Its subcellular location is the cytoplasm. It carries out the reaction UDP-N-acetyl-alpha-D-muramoyl-L-alanine + D-glutamate + ATP = UDP-N-acetyl-alpha-D-muramoyl-L-alanyl-D-glutamate + ADP + phosphate + H(+). It participates in cell wall biogenesis; peptidoglycan biosynthesis. In terms of biological role, cell wall formation. Catalyzes the addition of glutamate to the nucleotide precursor UDP-N-acetylmuramoyl-L-alanine (UMA). The sequence is that of UDP-N-acetylmuramoylalanine--D-glutamate ligase from Ralstonia nicotianae (strain ATCC BAA-1114 / GMI1000) (Ralstonia solanacearum).